The sequence spans 481 residues: Argininosuccinate lyase (481 aa).

Belongs to the lyase 1 family. Argininosuccinate lyase subfamily.

It localises to the cytoplasm. The enzyme catalyses 2-(N(omega)-L-arginino)succinate = fumarate + L-arginine. It functions in the pathway amino-acid biosynthesis; L-arginine biosynthesis; L-arginine from L-ornithine and carbamoyl phosphate: step 3/3. This Methanococcus vannielii (strain ATCC 35089 / DSM 1224 / JCM 13029 / OCM 148 / SB) protein is Argininosuccinate lyase.